A 220-amino-acid polypeptide reads, in one-letter code: 7-cyano-7-deazaguanine synthase (220 aa).

11 to 21 (VSGGMDSVTLM) contributes to the ATP binding site. Cys186, Cys194, Cys197, and Cys200 together coordinate Zn(2+).

Belongs to the QueC family. Zn(2+) serves as cofactor.

The enzyme catalyses 7-carboxy-7-deazaguanine + NH4(+) + ATP = 7-cyano-7-deazaguanine + ADP + phosphate + H2O + H(+). The protein operates within purine metabolism; 7-cyano-7-deazaguanine biosynthesis. Catalyzes the ATP-dependent conversion of 7-carboxy-7-deazaguanine (CDG) to 7-cyano-7-deazaguanine (preQ(0)). This is 7-cyano-7-deazaguanine synthase from Porphyromonas gingivalis (strain ATCC 33277 / DSM 20709 / CIP 103683 / JCM 12257 / NCTC 11834 / 2561).